Here is a 343-residue protein sequence, read N- to C-terminus: Mesaconyl-CoA hydratase (343 aa).

The region spanning 47–116 is the MaoC-like domain; sequence SDEFARACGL…STVIGLKENS (70 aa). Residues 60–63, 83–86, and 94–96 each bind substrate; these read PVDE, VANL, and LKP.

It catalyses the reaction (2R,3S)-beta-methylmalyl-CoA = 2-methylfumaryl-CoA + H2O. Functionally, involved in the ethylmalonyl-CoA pathway for acetate assimilation. Catalyzes the reversible hydration of mesaconyl-CoA (2-methylfumaryl-CoA) to yield beta-methylmalyl-CoA ((2R,3S)-beta-methylmalyl-CoA). In Cereibacter sphaeroides (strain ATCC 17023 / DSM 158 / JCM 6121 / CCUG 31486 / LMG 2827 / NBRC 12203 / NCIMB 8253 / ATH 2.4.1.) (Rhodobacter sphaeroides), this protein is Mesaconyl-CoA hydratase (mch).